The primary structure comprises 163 residues: Putative phosphinothricin acetyltransferase YwnH (163 aa).

Residues 1–158 enclose the N-acetyltransferase domain; sequence MTLRLAEHRD…DGKRYDLKIL (158 aa). Residues 85–87, 94–98, and 124–126 each bind acetyl-CoA; these read IYI, KGVGS, and NKP.

Belongs to the acetyltransferase family. PAT/BAR subfamily.

It carries out the reaction phosphinothricin + acetyl-CoA = N-acetylphosphinothricin + CoA + H(+). This enzyme is an effector of phosphinothricin tripeptide (PTT or bialaphos) resistance. Inactivates PTT by transfer of an acetyl group. The polypeptide is Putative phosphinothricin acetyltransferase YwnH (ywnH) (Bacillus subtilis (strain 168)).